A 150-amino-acid polypeptide reads, in one-letter code: Large ribosomal subunit protein bL9 (150 aa).

It belongs to the bacterial ribosomal protein bL9 family.

Functionally, binds to the 23S rRNA. The protein is Large ribosomal subunit protein bL9 of Streptococcus pyogenes serotype M3 (strain SSI-1).